Here is a 371-residue protein sequence, read N- to C-terminus: Cytoplasmic tRNA 2-thiolation protein 1 (371 aa).

This sequence belongs to the TtcA family. CTU1/NCS6/ATPBD3 subfamily.

The protein resides in the cytoplasm. Its pathway is tRNA modification; 5-methoxycarbonylmethyl-2-thiouridine-tRNA biosynthesis. Its function is as follows. Plays a central role in 2-thiolation of mcm(5)S(2)U at tRNA wobble positions of tRNA(Lys), tRNA(Glu) and tRNA(Gln). Directly binds tRNAs and probably acts by catalyzing adenylation of tRNAs, an intermediate required for 2-thiolation. It is unclear whether it acts as a sulfurtransferase that transfers sulfur from thiocarboxylated URM1 onto the uridine of tRNAs at wobble position. Prior mcm(5) tRNA modification by the elongator complex is required for 2-thiolation. May also be involved in protein urmylation. The sequence is that of Cytoplasmic tRNA 2-thiolation protein 1 from Kluyveromyces lactis (strain ATCC 8585 / CBS 2359 / DSM 70799 / NBRC 1267 / NRRL Y-1140 / WM37) (Yeast).